Here is a 676-residue protein sequence, read N- to C-terminus: Serine/threonine-protein kinase Haspin homolog ALK2 (676 aa).

A disordered region spans residues 53-93; sequence HKGSAEDESQSFFTSSDSPTSKTRPVGKTIENDDYYGKRSS. Polar residues predominate over residues 62 to 75; sequence QSFFTSSDSPTSKT. A KEN box motif is present at residues 116-118; sequence KEN. A D box motif is present at residues 150–158; the sequence is RTPLRPISN. Residues 228–312 are disordered; the sequence is SSRSVNDQDP…HKTSHSSLNK (85 aa). Positions 232-259 are enriched in polar residues; that stretch reads VNDQDPNFVQPKPTNSLQKKSSISSFHN. The Protein kinase domain occupies 383-672; that stretch reads LCDVKYILHD…TCGDLLSLKG (290 aa). ATP is bound by residues 389-397 and Lys-430; that span reads ILHDLREAQ.

It belongs to the protein kinase superfamily. Ser/Thr protein kinase family. Haspin subfamily. Periodically phosphorylated during the cell cycle with a phosphorylation peak during mitosis and hyperphosphorylated after DNA damage.

The enzyme catalyses L-seryl-[protein] + ATP = O-phospho-L-seryl-[protein] + ADP + H(+). It catalyses the reaction L-threonyl-[protein] + ATP = O-phospho-L-threonyl-[protein] + ADP + H(+). Its function is as follows. Serine/threonine haspin-like protein kinase involved in cell cycle regulation. In Saccharomyces cerevisiae (strain ATCC 204508 / S288c) (Baker's yeast), this protein is Serine/threonine-protein kinase Haspin homolog ALK2 (ALK2).